The primary structure comprises 635 residues: Transcription termination factor FttA (635 aa).

KHa regions lie at residues 1 to 69 and 4 to 69; these read MSAE…PSVL and EDIL…PSVL. A KHb region spans residues 70–137; sequence VEPDIAKDKI…WAPKPVRTPP (68 aa). Metallo-beta-lactamase N-terminus regions lie at residues 179-382 and 179-383; these read WVRT…YGGY and WVRT…GGYD. 2 beta-Casp regions span residues 180 to 577 and 383 to 576; these read VRTS…GFSG and DDVL…EGFS. Positions 241, 243, 245, 246, 328, and 351 each coordinate Zn(2+). 2 metallo-beta-lactamase C-terminus regions span residues 577-635 and 578-635; these read GHSD…IRLR and HSDR…IRLR. H602 lines the Zn(2+) pocket.

It belongs to the metallo-beta-lactamase superfamily. RNA-metabolizing metallo-beta-lactamase-like family. FttA subfamily. In terms of assembly, homodimer. Interacts with RNA polymerase (RNAP); interaction is not dependent on DNA or RNA. Interacts with the Spt4-Spt5 complex. Zn(2+) serves as cofactor.

The protein resides in the chromosome. Its function is as follows. Terminates transcription on the whole genome. Termination is linked to FttA-mediated RNA cleavage and does not require NTP hydrolysis. Cleaves endonucleolytically at the RNA exit channel of RNA polymerase (RNAP); the 5'-3' exonuclease activity of this protein degrades the nascent RNA released from RNAP. Terminates transcription genome-wide. Transcription termination is most effective in vivo on RNAs with more than one U4-tract in their 3'-ends (including non-protein coding RNAs); U4-tracts are recognized by this protein. Also plays a role in termination of RNAs without U-tracts by an unknown mechanism. Has endonuclease activity after U-rich tracts in transcription termination sites. Binds RNA at U4-tracts found directly upstream of the experimentally determined transcription termination sites; binds preferentially to RNAs with more U4-tracts at their 3'-ends. In Methanococcus maripaludis (strain DSM 14266 / JCM 13030 / NBRC 101832 / S2 / LL), this protein is Transcription termination factor FttA.